The sequence spans 346 residues: NADH-ubiquinone oxidoreductase chain 2 (346 aa).

11 consecutive transmembrane segments (helical) span residues 1-21, 26-46, 60-80, 96-116, 122-142, 151-171, 178-198, 199-219, 242-262, 274-294, and 320-340; these read MSPY…MLIS, WVFM…ILVW, FIVQ…SLSG, MMIM…YWVV, LNYI…LAVL, SSML…GGLG, LLAF…VAGS, LLGL…FSIL, VLLG…GFFG, LLLG…FYYL, and LSGL…LVGG.

Belongs to the complex I subunit 2 family.

It is found in the mitochondrion inner membrane. The enzyme catalyses a ubiquinone + NADH + 5 H(+)(in) = a ubiquinol + NAD(+) + 4 H(+)(out). Its function is as follows. Core subunit of the mitochondrial membrane respiratory chain NADH dehydrogenase (Complex I) that is believed to belong to the minimal assembly required for catalysis. Complex I functions in the transfer of electrons from NADH to the respiratory chain. The immediate electron acceptor for the enzyme is believed to be ubiquinone. In Branchiostoma lanceolatum (Common lancelet), this protein is NADH-ubiquinone oxidoreductase chain 2 (ND2).